Consider the following 483-residue polypeptide: Glycogen synthase (483 aa).

Residue Lys-18 participates in ADP-alpha-D-glucose binding.

This sequence belongs to the glycosyltransferase 1 family. Bacterial/plant glycogen synthase subfamily.

The enzyme catalyses [(1-&gt;4)-alpha-D-glucosyl](n) + ADP-alpha-D-glucose = [(1-&gt;4)-alpha-D-glucosyl](n+1) + ADP + H(+). It functions in the pathway glycan biosynthesis; glycogen biosynthesis. In terms of biological role, synthesizes alpha-1,4-glucan chains using ADP-glucose. In Rhodopseudomonas palustris (strain TIE-1), this protein is Glycogen synthase.